Here is a 371-residue protein sequence, read N- to C-terminus: Glutamate 5-kinase (371 aa).

Lys-14 lines the ATP pocket. Substrate is bound by residues Ser-54, Asp-141, and Asn-153. An ATP-binding site is contributed by 173 to 174 (TD). The PUA domain occupies 280–357 (AGSLIVDAGA…SDIEQLLGYI (78 aa)).

It belongs to the glutamate 5-kinase family.

Its subcellular location is the cytoplasm. It catalyses the reaction L-glutamate + ATP = L-glutamyl 5-phosphate + ADP. It functions in the pathway amino-acid biosynthesis; L-proline biosynthesis; L-glutamate 5-semialdehyde from L-glutamate: step 1/2. Its function is as follows. Catalyzes the transfer of a phosphate group to glutamate to form L-glutamate 5-phosphate. The sequence is that of Glutamate 5-kinase from Azoarcus sp. (strain BH72).